The chain runs to 339 residues: DNA-directed RNA polymerase subunit alpha (339 aa).

The interval Met-1–Glu-233 is alpha N-terminal domain (alpha-NTD). Residues Gly-266–Phe-339 are alpha C-terminal domain (alpha-CTD).

The protein belongs to the RNA polymerase alpha chain family. As to quaternary structure, in plastids the minimal PEP RNA polymerase catalytic core is composed of four subunits: alpha, beta, beta', and beta''. When a (nuclear-encoded) sigma factor is associated with the core the holoenzyme is formed, which can initiate transcription.

The protein resides in the plastid. It is found in the chloroplast. The enzyme catalyses RNA(n) + a ribonucleoside 5'-triphosphate = RNA(n+1) + diphosphate. DNA-dependent RNA polymerase catalyzes the transcription of DNA into RNA using the four ribonucleoside triphosphates as substrates. This is DNA-directed RNA polymerase subunit alpha from Hordeum bulbosum (Bulbous barley).